Here is a 169-residue protein sequence, read N- to C-terminus: N-alpha-acetyltransferase 50 (169 aa).

Residues 5 to 154 (IELGDVTPHN…DAHVLQKNLK (150 aa)) form the N-acetyltransferase domain. Position 30 (tyrosine 30) interacts with substrate. The active site involves tyrosine 72. Methionine 74 contributes to the substrate binding site. Acetyl-CoA is bound at residue 76–89 (LGCLAPYRRLGIGT). A CoA-binding site is contributed by 78 to 89 (CLAPYRRLGIGT). Histidine 111 is a catalytic residue. 116–125 (NESAIDFYRK) serves as a coordination point for CoA. The interval 137-140 (YYKR) is substrate.

This sequence belongs to the acetyltransferase family. GNAT subfamily.

It is found in the cytoplasm. The protein localises to the nucleus. The enzyme catalyses N-terminal L-methionyl-L-alanyl-[protein] + acetyl-CoA = N-terminal N(alpha)-acetyl-L-methionyl-L-alanyl-[protein] + CoA + H(+). It catalyses the reaction N-terminal L-methionyl-L-seryl-[protein] + acetyl-CoA = N-terminal N(alpha)-acetyl-L-methionyl-L-seryl-[protein] + CoA + H(+). The catalysed reaction is N-terminal L-methionyl-L-valyl-[protein] + acetyl-CoA = N-terminal N(alpha)-acetyl-L-methionyl-L-valyl-[protein] + CoA + H(+). It carries out the reaction N-terminal L-methionyl-L-threonyl-[protein] + acetyl-CoA = N-terminal N(alpha)-acetyl-L-methionyl-L-threonyl-[protein] + CoA + H(+). The enzyme catalyses N-terminal L-methionyl-L-lysyl-[protein] + acetyl-CoA = N-terminal N(alpha)-acetyl-L-methionyl-L-lysyl-[protein] + CoA + H(+). It catalyses the reaction N-terminal L-methionyl-L-leucyl-[protein] + acetyl-CoA = N-terminal N(alpha)-acetyl-L-methionyl-L-leucyl-[protein] + CoA + H(+). The catalysed reaction is N-terminal L-methionyl-L-phenylalanyl-[protein] + acetyl-CoA = N-terminal N(alpha)-acetyl-L-methionyl-L-phenylalanyl-[protein] + CoA + H(+). It carries out the reaction N-terminal L-methionyl-L-tyrosyl-[protein] + acetyl-CoA = N-terminal N(alpha)-acetyl-L-methionyl-L-tyrosyl-[protein] + CoA + H(+). N-alpha-acetyltransferase that acetylates the N-terminus of proteins that retain their initiating methionine. Has a broad substrate specificity: able to acetylate the initiator methionine of most peptides, except for those with a proline in second position. Also displays N-epsilon-acetyltransferase activity by mediating acetylation of the side chain of specific lysines on proteins. The relevance of N-epsilon-acetyltransferase activity is however unclear. Required for sister chromatid cohesion during mitosis by promoting binding of CDCA5/sororin to cohesin. The polypeptide is N-alpha-acetyltransferase 50 (naa50) (Xenopus tropicalis (Western clawed frog)).